Consider the following 487-residue polypeptide: Polyamine oxidase 4 (487 aa).

FAD is bound by residues Glu-53, Arg-61, Val-242, and Glu-429. Residues 485–487 carry the Microbody targeting signal motif; the sequence is CRT.

Belongs to the flavin monoamine oxidase family. FAD is required as a cofactor. In terms of tissue distribution, widely expressed.

The protein resides in the peroxisome. The catalysed reaction is spermine + O2 + H2O = 3-aminopropanal + spermidine + H2O2. It catalyses the reaction norspermine + O2 + H2O = norspermidine + 3-aminopropanal + H2O2. The enzyme catalyses thermospermine + O2 + H2O = 3-aminopropanal + spermidine + H2O2. Its pathway is amine and polyamine degradation; spermine degradation. Flavoenzyme involved in polyamine back-conversion. Catalyzes the oxidation of the secondary amino group of polyamines, such as spermine. Substrate preference is spermine &gt; thermospermine &gt; norspermine. No activity detected when putrescine, spermidine or N(1)-acetylspermidine are used as substrates. Plays an important role in the regulation of polyamine intracellular concentration. The protein is Polyamine oxidase 4 of Oryza sativa subsp. japonica (Rice).